A 2094-amino-acid chain; its full sequence is MANVFQIAVFGDLSVPYHSELRRLFSEKRDYVLATLFTKSYYAVKSEISRLPPSQRAQFPFSSNIEELLNADKESTTSNYALDSFFFCLCQISSFVSHLNRSGTSYPRASSSCLASRCIGLLAAVAISCSENVYDLVSIAPEVVALAFRVGLLVQGKTKSVTLSSGNGASCSTVIAGLDEPAASQLLNAYFDNKGAPALSRVYVSAVGSGTITLSGPPAQLKEFLSHHSDLKAGKIQVGGLFHSPSLYTDADVSGLVASATAHLRGRVARIPVILNGHEKQQELVGGETCQHLLEVVVSDILRHQMRWDLAAERVIRAIRRSGCSAVELLPFVAGSVEGLSSVLRATMGIDRVDVPNTAGVDSSSRGSGHADAEKQPARSKIAIIGFSGRYPEADDNEEFWELLAAGLDVHREIPKERFDPYLYFDPTCKKKNTSGVTKGCFVRNPDLFDSRFFSMSPREADQADPAQRFALMTAYEAMEMAGFVPDSTPSSQRSRVGVFYGTASDDYREINAAQNVDTYFVPGGSRAFLPARINYHFRFSGPSFDVDTACSSGLAAVHIACNSLWAEDCDVAIAGGTNILTNPDNWAGLDRAHFLSRTGNCNTFDDAADGYCRSDTVATVILKRLEDALLDGDPVFGTILGAYTNHSAEAVSMTRPHSGAQRAICTRILRSSNVDCSEVSYVEMHGTGTQHGDATEMDSVLSVFAPDTTSRKSPLFIGSVKANVGHAESAAGISSLVKVLLMMQKNAIPRHVGIKTKLNRNFPKDLVQRNVHISLENRSWPRPDPRVVPHGRRVFINNFGAAGGNSSVLVEDAPVRPAPERDDASWPVHAVAVSAKTQNSFKENIRALIAYLETRPDVSLGSLSYTTTARRIHYSYRTAVVGSSVDEIRNALHDVAAREKHLSTAGGGPPIGFSFTGQGSQYLGMGKKLLSLPQFESLLAGLDGIVRLQGFPSILDVVSGKAETPIEDMSPVKVQLAIACLEMALGKFWIALGVVPQIVVGHSLGEYAALNIAGVLSDADTIHLVGTRARLLEKACSMGSHSMLAVKASAAEASSLRSSSHPDLDIACINGPEDTVVAGSNSQIEAFKDLLNGRSVKSTQVKVQFAFHSAQVEPMLEAFRQACGAVVVNEPSIPVISPLLGRVMKSASDIGPVGDYLARHCRETVNFCEGVLSARNSGLIPDKMMWVEVGPHPICSNMLRSTLGSSTQTIPSLRRGEDDCKIFTPALAKLYDSGLAINWGEYHAGAQQTKQVLLLPSYRWELKSHWIPYTNDWCLTKGDAPAPQLLALPEAAAAAAAAERRLFTTSVQYITAESYGAQEASMTARTDVQHPDFREVLLAHQVNGRPVCSSAVYADMAYTMFSRMLEKSSVPFDKSDLGIEVADMAADKSLILNDDPSPQMLELKASVNWSTRQGSFSMSSISSADGKPTAKHAKCSGFFTDKSRWKSEWKRRDFLVKSRIQELRSSVHDDSGSVHMIKTGMFYKLFTALVDYRDSFKGCRELVMRSADLESTAKVRFNTPAGTADKWKLPPHWLDSLGQITGFTMNGNDEVDSKNQVYINHGWDNMKICGVLSDQTTYNTYLKMQPKDKGSYCGDVYIFNQDMDEVVAVYEGVTFAAVQRKVLDLVLPKPKAAAQSGAAAAAAAAAPSQRQQQQQQQQQQQPAQPVAASQESGMDDMPPTLVPSEKKDVPSEKLKVIIAEEVGASISDVQDDAELAPLGVDSLLALTISDRMLEELGLRVDSSAFISCITVAELVRHILGSSTPSSDSGPATPSITPLQEPDFGTSALSERIESAFASVQVESDRCSDTTQYGDEKADAVTKFEIPPATSVLLQGNPRTCTRKVWLFPDGSGSAASYMPLPDVDPAKVAIYGLSSPFIKHTATAKPCQFGEMTAAYVAEMRRRQPSGPYSVGGWSAGGLCAYDAAQRLVADGETVDALILIDSPNPIGLKELPPRLYNELSRLNVFGAEPGAKVPEWLVPHFKLFADILVTCKLRPWQAAKPLPAWALWARNGVDENQTIERWPSDPENMTWLLNRRTQAILGCNGWDELLGKKNITVGVVEGAHHFSMLKQPAVPQVSDFLRTIMESTGAGI.

The N-terminal acylcarrier protein transacylase (SAT) domain stretch occupies residues 9-243; sequence VFGDLSVPYH…GKIQVGGLFH (235 aa). Residues 357–377 are disordered; that stretch reads NTAGVDSSSRGSGHADAEKQP. The Ketosynthase family 3 (KS3) domain occupies 379-813; that stretch reads RSKIAIIGFS…GGNSSVLVED (435 aa). Residues cysteine 551, histidine 686, and histidine 727 each act as for beta-ketoacyl synthase activity in the active site. Positions 914-1227 are malonyl-CoA:ACP transacylase (MAT) domain; it reads FSFTGQGSQY…EDDCKIFTPA (314 aa). The For acyl/malonyl transferase activity role is filled by serine 1004. A product template (PT) domain region spans residues 1305-1629; that stretch reads TTSVQYITAE…QRKVLDLVLP (325 aa). The tract at residues 1308-1445 is N-terminal hotdog fold; that stretch reads VQYITAESYG…CSGFFTDKSR (138 aa). One can recognise a PKS/mFAS DH domain in the interval 1308 to 1625; that stretch reads VQYITAESYG…FAAVQRKVLD (318 aa). Catalysis depends on histidine 1341, which acts as the Proton acceptor; for dehydratase activity. Positions 1473–1625 are C-terminal hotdog fold; the sequence is GSVHMIKTGM…FAAVQRKVLD (153 aa). Residue aspartate 1536 is the Proton donor; for dehydratase activity of the active site. A compositionally biased stretch (low complexity) spans 1644–1671; sequence AAAAPSQRQQQQQQQQQQQPAQPVAASQ. The segment at 1644-1689 is disordered; the sequence is AAAAPSQRQQQQQQQQQQQPAQPVAASQESGMDDMPPTLVPSEKKD. The 75-residue stretch at 1689 to 1763 folds into the Carrier domain; that stretch reads DVPSEKLKVI…ELVRHILGSS (75 aa). O-(pantetheine 4'-phosphoryl)serine is present on serine 1723. A compositionally biased stretch (polar residues) spans 1762 to 1778; sequence SSTPSSDSGPATPSITP. The interval 1762–1782 is disordered; that stretch reads SSTPSSDSGPATPSITPLQEP. The tract at residues 1844-2069 is claisen cyclase domain; it reads KVWLFPDGSG…GVVEGAHHFS (226 aa). Serine 1916 functions as the For Claisen cyclase activity in the catalytic mechanism.

It carries out the reaction 6 malonyl-CoA + acetyl-CoA + 6 H(+) = naphtopyrone YWA1 + 6 CO2 + 7 CoA + H2O. Its pathway is secondary metabolite biosynthesis. Functionally, non-reducing polyketide synthase; part of the gene cluster that mediates the biosynthesis of ustilaginoidins, dimeric gamma-naphthopyrones isolated from different fungal species. The first step in the biosynthesis of ustilaginoidins is the production of gamma-naphthopyrone precursor YWA1 by the non-reducing polyketide synthase ustP, via condensation of one acetyl-CoA starter unit with 6 malonyl-CoA units. YWA1 is then probably substrate of the ustZ to yield norrubrofusarin via a dehydration reaction. A key enzyme in the biosynthetic pathway is the laccase ustL, which catalyzes the oxidative dimerization of norrubrofusarin to ustilaginoidin A. It can produce the M- and P-atropisomers in varying amounts, depending on the reaction conditions. For the biosynthesis of 3-methylustilaginoid in derivatives such as chaetochromin A, a methylated derivative of YWA1 is required. The C-methylation is considered to be catalyzed by ustM, the phosphopantetheine attachment site of which indicates that it acts on the growing polyketide chain before release of the product. For the biosynthesis of chaetochromin A, it is assumed that saturation of the D2 double bond takes place before dimerization, and is probably catalyzed by an external reductase because no candidate gene was identified within the cluster. The chain is Non-reducing polyketide synthase ustP from Ustilaginoidea virens (Rice false smut fungus).